Here is a 36-residue protein sequence, read N- to C-terminus: Pancreatic polypeptide (36 aa).

Phenylalanine amide is present on Phe-36.

It belongs to the NPY family.

The protein resides in the secreted. Functionally, hormone secreted by pancreatic cells that acts as a regulator of pancreatic and gastrointestinal functions. The chain is Pancreatic polypeptide (ppy) from Alligator mississippiensis (American alligator).